The sequence spans 396 residues: MTTVQTSVYEPLTEPKAVALAVRLGLFRDGTPLACREIGDGNLNLVFHIVDQETKQGVIIKQALPYAKVVGESWPLTLKRAVIESNALRTFASYVPQYVPKVYYSDESLAITVMEDLSRLQIARKGLIEGKTYPLLSQHIGEFVAKTAFYTSDFGMNQQEKKKLAQSFVNPELCKITEDLVFTDPFFDHETNNFEDELRPDVEALWRDDRLHLEAAKLKRKFLTEADVLLHGDLHTGSIFVSADETKVIDPEFAFYGPIGFDLGQFFANLLLNALSRSELERQPLFDHIDRTWDVFASVFSNLWRTESVETYAATPGLLEDVLRHAFIDAVGFAGCEVIRRTIGLAHVADLDGIEHKDERLVAKRHALRLGRRLIIERRVFTGTEDFRRLFAETEQ.

ATP-binding positions include asparagine 44, lysine 61, and 115–117; that span reads EDL. Aspartate 233 is a binding site for substrate. 250–252 contacts ATP; sequence DPE. Arginine 340 serves as a coordination point for substrate.

This sequence belongs to the methylthioribose kinase family. As to quaternary structure, homodimer.

It carries out the reaction 5-(methylsulfanyl)-D-ribose + ATP = 5-(methylsulfanyl)-alpha-D-ribose 1-phosphate + ADP + H(+). The protein operates within amino-acid biosynthesis; L-methionine biosynthesis via salvage pathway; S-methyl-5-thio-alpha-D-ribose 1-phosphate from S-methyl-5'-thioadenosine (hydrolase route): step 2/2. Functionally, catalyzes the phosphorylation of methylthioribose into methylthioribose-1-phosphate. This is Methylthioribose kinase from Geobacillus kaustophilus (strain HTA426).